A 590-amino-acid chain; its full sequence is MIRTQDAGALRAENVGQTVTLAGWVANRRDHGGVAFIDLREASGVVQVVIRDEQVAHHLRAEYCLAVTGEVTRRKEGNENPNLATGEVEVVANEVEVLSAAAPLPFPISDHVDVGEEARLKHRYLDLRRSGPNNALRLRSKVNKAARDVLDRHDFVEIETPTLTRSTPEGARDFLVPARLQPGSWYALPQSPQLFKQLLMVAGMERYYQIARCYRDEDFRADRQPEFTQLDIEMSFVEQDDVLAVAEEVLVALWKLVGHDVPVPLPRMTYAESMERYGTDKPDLRMGQELVDCTAYFADTPFRVFQADYVGAVVMPGGASQPRKQLDAWQEWAKQRGAKGLAYVLVQDDGELTGPVSKNITDGESAGLAEHTGAKPGDCIFFAAGAPKPSRALLGAARLEIGRRCDLIDEDAWSFLWVVDAPLFEPTADATASGDVALGYSAWTAVHHAFTSPQDVDGFDADPGSALAWAYDIVCNGNEIGGGSIRIHREDVQKRVFAIMGIDEAEAQEKFGFLLEAFKYGAPPHGGIAFGWDRIVALLAGTESIRDVIAFPKSGGGFDPLTAAPAPITPEQRKEAGVDARPQQDLPPQS.

Glu-169 is a binding site for L-aspartate. Residues 193–196 (QLFK) form an aspartate region. L-aspartate is bound at residue Arg-215. ATP is bound by residues 215–217 (RDE) and Gln-224. His-447 is a binding site for L-aspartate. Glu-479 serves as a coordination point for ATP. Position 486 (Arg-486) interacts with L-aspartate. Residue 531 to 534 (GWDR) coordinates ATP. The disordered stretch occupies residues 556–590 (GGFDPLTAAPAPITPEQRKEAGVDARPQQDLPPQS).

Belongs to the class-II aminoacyl-tRNA synthetase family. Type 1 subfamily. In terms of assembly, homodimer.

It localises to the cytoplasm. The enzyme catalyses tRNA(Asx) + L-aspartate + ATP = L-aspartyl-tRNA(Asx) + AMP + diphosphate. Functionally, aspartyl-tRNA synthetase with relaxed tRNA specificity since it is able to aspartylate not only its cognate tRNA(Asp) but also tRNA(Asn). Reaction proceeds in two steps: L-aspartate is first activated by ATP to form Asp-AMP and then transferred to the acceptor end of tRNA(Asp/Asn). This Nocardioides sp. (strain ATCC BAA-499 / JS614) protein is Aspartate--tRNA(Asp/Asn) ligase.